We begin with the raw amino-acid sequence, 546 residues long: NAD(P)H-quinone oxidoreductase chain 4 (546 aa).

14 helical membrane passes run phenylalanine 24–phenylalanine 44, phenylalanine 56–phenylalanine 76, isoleucine 106–tryptophan 126, proline 132–valine 152, leucine 156–tryptophan 176, phenylalanine 188–phenylalanine 208, isoleucine 232–histidine 252, threonine 263–leucine 283, phenylalanine 297–phenylalanine 317, isoleucine 326–serine 346, alanine 352–alanine 372, phenylalanine 396–valine 416, valine 437–methionine 457, and valine 484–valine 504.

It belongs to the complex I subunit 4 family.

The protein resides in the cellular thylakoid membrane. It catalyses the reaction a plastoquinone + NADH + (n+1) H(+)(in) = a plastoquinol + NAD(+) + n H(+)(out). The catalysed reaction is a plastoquinone + NADPH + (n+1) H(+)(in) = a plastoquinol + NADP(+) + n H(+)(out). NDH-1 shuttles electrons from NAD(P)H, via FMN and iron-sulfur (Fe-S) centers, to quinones in the respiratory chain. The immediate electron acceptor for the enzyme in this species is believed to be plastoquinone. Couples the redox reaction to proton translocation (for every two electrons transferred, four hydrogen ions are translocated across the cytoplasmic membrane), and thus conserves the redox energy in a proton gradient. The protein is NAD(P)H-quinone oxidoreductase chain 4 of Prochlorococcus marinus (strain MIT 9515).